The primary structure comprises 75 residues: uncharacterized protein (75 aa).

Residues 1 to 14 (MNDNNDNNNNNKNI) show a composition bias toward low complexity. The interval 1 to 30 (MNDNNDNNNNNKNIDNVDDDNDDNDKGKYK) is disordered.

This is an uncharacterized protein from Dictyostelium discoideum (Social amoeba).